The sequence spans 303 residues: Oxygen-dependent coproporphyrinogen-III oxidase (303 aa).

Ser-93 provides a ligand contact to substrate. A divalent metal cation-binding residues include His-97 and His-107. His-107 (proton donor) is an active-site residue. A substrate-binding site is contributed by 109–111 (NVR). Residues His-146 and His-176 each coordinate a divalent metal cation. The important for dimerization stretch occupies residues 241-276 (YVEFNLVYDRGTLFGLQSGGRTESILMSLPPQVRWG). 259–261 (GGR) serves as a coordination point for substrate.

Belongs to the aerobic coproporphyrinogen-III oxidase family. As to quaternary structure, homodimer. A divalent metal cation serves as cofactor.

Its subcellular location is the cytoplasm. It carries out the reaction coproporphyrinogen III + O2 + 2 H(+) = protoporphyrinogen IX + 2 CO2 + 2 H2O. It functions in the pathway porphyrin-containing compound metabolism; protoporphyrin-IX biosynthesis; protoporphyrinogen-IX from coproporphyrinogen-III (O2 route): step 1/1. Involved in the heme biosynthesis. Catalyzes the aerobic oxidative decarboxylation of propionate groups of rings A and B of coproporphyrinogen-III to yield the vinyl groups in protoporphyrinogen-IX. This is Oxygen-dependent coproporphyrinogen-III oxidase from Pseudomonas entomophila (strain L48).